Reading from the N-terminus, the 454-residue chain is Nuclear envelope integral membrane protein (454 aa).

An N-terminal signal peptide occupies residues 1–18; it reads MHSAGLLMLTVAGYFTSG. N-linked (GlcNAc...) asparagine glycosylation occurs at asparagine 38. 5 helical membrane passes run 138 to 158, 166 to 186, 197 to 217, 231 to 251, and 280 to 300; these read IPLD…LFSA, VFYY…VVIY, MMYG…KQLA, VLGY…RIGP, and TSAV…PISW. The segment covering 388–405 has biased composition (acidic residues); that stretch reads SMDAAPEEESVEEPEEDK. Residues 388 to 454 are disordered; it reads SMDAAPEEES…QEVDLRQVVQ (67 aa). Over residues 414–424 the composition is skewed to polar residues; that stretch reads NSQFRYQQAAR. Residues 428 to 446 are compositionally biased toward acidic residues; the sequence is PEPESESDDSEEEEFFEQE.

It belongs to the NEMP family. In terms of assembly, interacts with OTE. Expressed in both germline and somatic cells in the larval testis and prepupal ovary (at protein level). Also detected in the larval eye and larval wing disk (at protein level).

It localises to the nucleus inner membrane. In terms of biological role, contributes to nuclear envelope stiffness in germ cells. Required for male and female fertility. The protein is Nuclear envelope integral membrane protein of Drosophila melanogaster (Fruit fly).